The sequence spans 1466 residues: ABC transporter C family member 6 (1466 aa).

Helical transmembrane passes span 16–36 (SVLSFFLNLVLLLILFGSWLF), 63–83 (LVLICCVSLSVFYSVLSLLSC), 91–111 (WPFLDLLLAALTWGSISVYLF), 128–148 (VWWVFFFVVSCYHLVVDFVLY), 158–178 (FVISDLVGVCAGLFLCCSCLW), 286–306 (IVLSALLAFVYTVSCYVAPYL), 322–339 (NQGYVLVTTFFVAKLVEC), 400–420 (WFMHDPWILVLQVSLALWILY), 425–445 (LGSIAAFPATILVMLANYPFA), and 512–532 (SVLWAAPSFISATAFGACLLL). Residues 286–567 (IVLSALLAFV…LPETISMIVQ (282 aa)) enclose the ABC transmembrane type-1 1 domain. Residues 601-824 (VEISNGTFSW…GTDFMELVGA (224 aa)) form the ABC transporter 1 domain. ATP is bound at residue 636-643 (GTVGSGKS). A disordered region spans residues 840–876 (ASEKSTTDKENEVLHHKEKQENGSDNKPSGQLVQEEE). Basic and acidic residues predominate over residues 844–863 (STTDKENEVLHHKEKQENGS). Helical transmembrane passes span 890–910 (YMALAYGGAVIPLILVVQVLF), 937–957 (GFTLILVYVLLAVASSFCILI), and 1026–1046 (ILGIIGVIVQVAWQVLIVFIP). An ABC transmembrane type-1 2 domain is found at 900-1182 (IPLILVVQVL…LIWTLCDLEN (283 aa)). Residues 1219–1453 (ITICNLQVRY…RSSLFSKLVA (235 aa)) form the ABC transporter 2 domain. 1253 to 1260 (GRTGCGKS) is a binding site for ATP.

This sequence belongs to the ABC transporter superfamily. ABCC family. Conjugate transporter (TC 3.A.1.208) subfamily. As to expression, ubiquitous.

The protein localises to the membrane. The enzyme catalyses ATP + H2O + xenobioticSide 1 = ADP + phosphate + xenobioticSide 2.. Its function is as follows. Pump for glutathione S-conjugates. The protein is ABC transporter C family member 6 (ABCC6) of Arabidopsis thaliana (Mouse-ear cress).